A 422-amino-acid polypeptide reads, in one-letter code: ATP-dependent Clp protease ATP-binding subunit ClpX 1 (422 aa).

A ClpX-type ZB domain is found at D4–E57. Positions 16, 19, 38, and 41 each coordinate Zn(2+). P120–L127 provides a ligand contact to ATP.

The protein belongs to the ClpX chaperone family. Component of the ClpX-ClpP complex. Forms a hexameric ring that, in the presence of ATP, binds to fourteen ClpP subunits assembled into a disk-like structure with a central cavity, resembling the structure of eukaryotic proteasomes.

Functionally, ATP-dependent specificity component of the Clp protease. It directs the protease to specific substrates. Can perform chaperone functions in the absence of ClpP. The chain is ATP-dependent Clp protease ATP-binding subunit ClpX 1 from Methylococcus capsulatus (strain ATCC 33009 / NCIMB 11132 / Bath).